The sequence spans 214 residues: pH-sensitive calcium channel (214 aa).

Residues 1-15 (MQATVHESKQSIMQR) are Cytoplasmic-facing. A helical transmembrane segment spans residues 16–37 (ILTVFVFTLLIATVGLFIGQFV). Residues 38–44 (PVALMLP) lie on the Extracellular side of the membrane. Residues 45–59 (LSILEVAMIILAFWM) traverse the membrane as a helical segment. Residues 60–66 (RRRKAVG) lie on the Cytoplasmic side of the membrane. The chain crosses the membrane as a helical span at residues 67–86 (YAFVYTFAFVSGITLFPIVS). Topologically, residues 87-95 (HYASIAGAY) are extracellular. A helical transmembrane segment spans residues 96 to 117 (VVLEAFGSTFVIFAVLGTIGAK). Residues 118–122 (MKKDL) are Cytoplasmic-facing. The chain crosses the membrane as a helical span at residues 123–146 (SFLWSFLLVAVLALAVVGIFNIFS). Topologically, residues 147–151 (PLNSA) are extracellular. Residues 152–175 (AMMAYSVIGTIVFSLYILYDLNQI) form a helical membrane-spanning segment. The Cytoplasmic portion of the chain corresponds to 176 to 185 (KHRHITEDLI). Residues 186–207 (PVMALSLYLDFINLFINLLRFF) traverse the membrane as a helical segment. The Extracellular segment spans residues 208–214 (GILSSDD).

This sequence belongs to the BI1 family. As to quaternary structure, monomer.

The protein localises to the cell membrane. It catalyses the reaction Ca(2+)(in) = Ca(2+)(out). Its activity is regulated as follows. The calcium-release activity is mediated by two factors: pH and transmembrane ion gradient. It was proposed, based on an MD simulation, that the conserved aspartyl dyad (Asp-171-Asp-195) regulates Ca(2+) binding, pH sensing, and the channel pore opening and closing, and that protonation of Asp-171 probably weakens its interaction with Arg-60, facilitating the opening of the channel. Another study using nanodiscs suggests that Asp-171 is not a pH sensor regulating the pore dynamics; instead, it is only involved in the gating of calcium ions. When crystallized in detergents at different pH conditions, the transition between open and closed conformations is regulated by pH. Ca(2+) binding is inhibited by Na(+), K(+), Li(+), Yb(3+) and Lu(3+), but not by Mg(2+) and Mn(2+). In terms of biological role, calcium channel that probably plays a role in the regulation of calcium homeostasis. Uptakes calcium ions and mediates calcium flux in proteoliposomes in a pH-dependent manner. When expressed in E.coli in the presence of high extracellular calcium concentrations, shows calcium-leak activity, increasing intracellular calcium concentration. It can also mediate Ca(2+) flux from the endoplamic reticulum (ER) when expressed in permeabilized mammalian cells. Calcium transport activity is also detected in ER-like lipid vesicles. In Bacillus subtilis (strain 168), this protein is pH-sensitive calcium channel.